The chain runs to 488 residues: Protein Notchless (488 aa).

A disordered region spans residues 1-22 (MLAKKQKMQETDTEQEATPHTI). The tract at residues 19–101 (PHTIQARLVS…VIDIVYQPQA (83 aa)) is ubiquitin-like (UBL) domain. WD repeat units follow at residues 117-156 (GHAEAVVSLNFSPDGAHLASGSGDTTVRLWDLNTETPHFT), 159-198 (GHKQWVLCVSWAPDGKRLASGCKAGSIIIWDPETGQQKGR), 202-246 (GHKK…CLMN), 249-287 (GHTNAVTAVRWGGAGLIYTSSKDRTVKMWRAADGILCRT), 329-370 (LQES…CVER), 373-412 (GHQNVVNDVKYSPDVKLIASASFDKSVRLWRASDGQYMAT), 415-454 (GHVQAVYTVAWSADSRLIVSGSKDSTLKVWSVQTKKLAQE), and 457-488 (GHADEVFGVDWAPDGSRVASGGKDKVIKLWAY).

Belongs to the NLE1/RSA4 family. As to quaternary structure, interacts with Notch (via cytoplasmic domain). Associates with the pre-60S ribosomal particle.

The protein resides in the nucleus. Its subcellular location is the nucleolus. In terms of biological role, plays a role in regulating Notch activity. This is Protein Notchless from Drosophila melanogaster (Fruit fly).